The following is a 65-amino-acid chain: Light-harvesting protein B800/830/1020 alpha-2 chain (65 aa).

At 1 to 13 (MWKLWKFVDFRMT) the chain is on the cytoplasmic side. Residues 14 to 34 (AVGFHIFFALIAFAVHFACIS) traverse the membrane as a helical segment. Histidine 29 lines the a bacteriochlorophyll pocket. Residues 35-65 (SERFNWLEGAPAAEYYMDENPGIWKRTSYDG) lie on the Periplasmic side of the membrane.

This sequence belongs to the antenna complex alpha subunit family. The core complex is formed by different alpha and beta chains, binding bacteriochlorophyll molecules, and arranged most probably in tetrameric structures disposed around the reaction center. The non-pigmented gamma chains may constitute additional components.

The protein localises to the cell inner membrane. Its function is as follows. Antenna complexes are light-harvesting systems, which transfer the excitation energy to the reaction centers. The chain is Light-harvesting protein B800/830/1020 alpha-2 chain from Halorhodospira halochloris (Ectothiorhodospira halochloris).